Consider the following 413-residue polypeptide: Multifunctional CCA protein (413 aa).

G8 and R11 together coordinate ATP. The CTP site is built by G8 and R11. The Mg(2+) site is built by D21 and D23. ATP-binding residues include R91, R137, and R140. CTP contacts are provided by R91, R137, and R140. The HD domain occupies 228 to 329 (TGIHTLMTLS…VKLFDNIDAW (102 aa)).

Belongs to the tRNA nucleotidyltransferase/poly(A) polymerase family. Bacterial CCA-adding enzyme type 1 subfamily. As to quaternary structure, monomer. Can also form homodimers and oligomers. The cofactor is Mg(2+). Ni(2+) is required as a cofactor.

It carries out the reaction a tRNA precursor + 2 CTP + ATP = a tRNA with a 3' CCA end + 3 diphosphate. The enzyme catalyses a tRNA with a 3' CCA end + 2 CTP + ATP = a tRNA with a 3' CCACCA end + 3 diphosphate. In terms of biological role, catalyzes the addition and repair of the essential 3'-terminal CCA sequence in tRNAs without using a nucleic acid template. Adds these three nucleotides in the order of C, C, and A to the tRNA nucleotide-73, using CTP and ATP as substrates and producing inorganic pyrophosphate. tRNA 3'-terminal CCA addition is required both for tRNA processing and repair. Also involved in tRNA surveillance by mediating tandem CCA addition to generate a CCACCA at the 3' terminus of unstable tRNAs. While stable tRNAs receive only 3'-terminal CCA, unstable tRNAs are marked with CCACCA and rapidly degraded. This is Multifunctional CCA protein from Enterobacter sp. (strain 638).